The chain runs to 355 residues: Cobalt-precorrin-5B C(1)-methyltransferase (355 aa).

It belongs to the CbiD family.

The catalysed reaction is Co-precorrin-5B + S-adenosyl-L-methionine = Co-precorrin-6A + S-adenosyl-L-homocysteine. The protein operates within cofactor biosynthesis; adenosylcobalamin biosynthesis; cob(II)yrinate a,c-diamide from sirohydrochlorin (anaerobic route): step 6/10. Functionally, catalyzes the methylation of C-1 in cobalt-precorrin-5B to form cobalt-precorrin-6A. This Parasynechococcus marenigrum (strain WH8102) protein is Cobalt-precorrin-5B C(1)-methyltransferase.